The primary structure comprises 296 residues: MTKKQLHLVIVTGMSGAGKTVAIQSFEDLGYFTIDNMPPALLPKFLQLVEIKEDNPKLALVVDMRSRSFFSEIQAVLDELENQDGLDFKILFLDAADKELVARYKETRRSHPLAADGRILDGIKLERELLAPLKNMSQNVVDTTELTPRELRKTLAEQFSDQEQAQSFRIEVMSFGFKYGIPIDADLVFDVRFLPNPYYLPELRNQTGVDEPVYDYVMNHPESEDFYQHLLALIEPILPSYQKEGKSVLTIAMGCTGGQHRSVAFAKRLAQDLSKNWSVNEGHRDKDRRKETVNRS.

Position 13–20 (13–20) interacts with ATP; the sequence is GMSGAGKT. GTP is bound at residue 63 to 66; that stretch reads DMRS.

It belongs to the RapZ-like family.

Functionally, displays ATPase and GTPase activities. The polypeptide is Nucleotide-binding protein SPT_1506 (Streptococcus pneumoniae (strain Taiwan19F-14)).